The chain runs to 251 residues: Triosephosphate isomerase (251 aa).

9-11 (NWK) serves as a coordination point for substrate. Residue His95 is the Electrophile of the active site. Glu167 functions as the Proton acceptor in the catalytic mechanism. Residues Gly173, Ser212, and 233 to 234 (GG) contribute to the substrate site.

This sequence belongs to the triosephosphate isomerase family. As to quaternary structure, homodimer.

It is found in the cytoplasm. The enzyme catalyses D-glyceraldehyde 3-phosphate = dihydroxyacetone phosphate. It functions in the pathway carbohydrate biosynthesis; gluconeogenesis. The protein operates within carbohydrate degradation; glycolysis; D-glyceraldehyde 3-phosphate from glycerone phosphate: step 1/1. Functionally, involved in the gluconeogenesis. Catalyzes stereospecifically the conversion of dihydroxyacetone phosphate (DHAP) to D-glyceraldehyde-3-phosphate (G3P). This is Triosephosphate isomerase from Pseudomonas syringae pv. syringae (strain B728a).